We begin with the raw amino-acid sequence, 293 residues long: ATP synthase gamma chain (293 aa).

This sequence belongs to the ATPase gamma chain family. In terms of assembly, F-type ATPases have 2 components, CF(1) - the catalytic core - and CF(0) - the membrane proton channel. CF(1) has five subunits: alpha(3), beta(3), gamma(1), delta(1), epsilon(1). CF(0) has three main subunits: a, b and c.

The protein resides in the cell inner membrane. Its function is as follows. Produces ATP from ADP in the presence of a proton gradient across the membrane. The gamma chain is believed to be important in regulating ATPase activity and the flow of protons through the CF(0) complex. The chain is ATP synthase gamma chain from Nitratidesulfovibrio vulgaris (strain DSM 19637 / Miyazaki F) (Desulfovibrio vulgaris).